The chain runs to 238 residues: Ankyrin repeat domain-containing protein 49 (238 aa).

Residues 38 to 57 (TGTQSLWVGNSDEDEEQEEK) form a disordered region. At S48 the chain carries Phosphoserine. A compositionally biased stretch (acidic residues) spans 48–57 (SDEDEEQEEK). ANK repeat units follow at residues 72-105 (DPSKLLLWAAEKNRLATVQRLLSEKAAEVNTRDE), 106-135 (DEYTPLHRAAYSGHIDVVRELVAKGADVHA), 139-168 (DGWTPLHSACKWNNTKVASFLLQHDADINA), and 172-205 (GLLTPLHLAAGNRDSRDTLELLLMNRYIKPELKN).

Expressed in spermatogonia, spermatocytes and round spermatids.

Its subcellular location is the nucleus. Its function is as follows. May have a role in spermatogenesis where it promotes autophagy in response to serum starvation, via the NF-kappaB pathway. In Mus musculus (Mouse), this protein is Ankyrin repeat domain-containing protein 49 (Ankrd49).